A 260-amino-acid chain; its full sequence is MVGVTAFGNFDLASLAIYSFWIFLAGLIYYLQTENMREGYPLENEDGTPAANQGPFPLPKPKTFILPHGRGTLTVPGPESEDRPIALARTAVSEGFPHAPTGDPMKDGVGPASWVARRDLPELDGHGHNKIKPMKAAAGFHVSAGKNPIGLPVRGCDLEIAGKVVDIWVDIPEQMARFLEVELKDGSTRLLPMQMVKVQSNRVHVNALSSDLFAGIPTIKSPTEVTLLEEDKICGYVAGGLMYAAPKRKSVVAAMLAEYA.

The Periplasmic segment spans residues 1 to 11 (MVGVTAFGNFD). Residues 12–31 (LASLAIYSFWIFLAGLIYYL) form a helical membrane-spanning segment. Over 32–260 (QTENMREGYP…VVAAMLAEYA (229 aa)) the chain is Cytoplasmic.

This sequence belongs to the reaction center PuhA family. In terms of assembly, heterotrimer composed of subunits L, M, and H. Requires a bacteriochlorophyll as cofactor. A bacteriopheophytin serves as cofactor. The cofactor is Fe cation. Mg(2+) is required as a cofactor. It depends on a ubiquinone as a cofactor.

The protein resides in the cellular chromatophore membrane. The reaction center is a membrane-bound complex that mediates the initial photochemical event in the electron transfer process of photosynthesis. The chain is Reaction center protein H chain (puhA) from Cereibacter sphaeroides (strain ATCC 17023 / DSM 158 / JCM 6121 / CCUG 31486 / LMG 2827 / NBRC 12203 / NCIMB 8253 / ATH 2.4.1.) (Rhodobacter sphaeroides).